The chain runs to 427 residues: Cholecystokinin receptor type A (427 aa).

Residues 1–41 are Extracellular-facing; it reads MDAVASLLGNASGIPPPCELGLDNETLFCLDQPPPSKEWQP. N-linked (GlcNAc...) asparagine glycosylation is found at asparagine 10 and asparagine 24. The cysteines at positions 18 and 29 are disulfide-linked. Residues 42–67 traverse the membrane as a helical segment; that stretch reads AVQILLYSLIFLLSVLGNTLVITVLI. Over 68 to 77 the chain is Cytoplasmic; the sequence is RNKRMRTVTN. The chain crosses the membrane as a helical span at residues 78-104; it reads IFLLSLAISDLMLCLFCMPFNLIPNLL. Over 105–115 the chain is Extracellular; that stretch reads KDFIFGSALCK. A disulfide bond links cysteine 114 and cysteine 196. The helical transmembrane segment at 116-137 threads the bilayer; it reads TTTYLMGTSVSVSTLNLVAISL. Residues 138–157 lie on the Cytoplasmic side of the membrane; sequence ERYGAICKPLQSRVWQTKSH. Residues 158-178 form a helical membrane-spanning segment; that stretch reads ALKVIAATWCLSFAIMTPYPI. The Extracellular segment spans residues 179–210; sequence YSNLVPFTKTNNQTANMCRFLLPSDVMQQAWH. Asparagine 190 carries an N-linked (GlcNAc...) asparagine glycan. Residues 211 to 234 traverse the membrane as a helical segment; that stretch reads TFLLLILFLIPGIVMMVAYGMISL. The Cytoplasmic portion of the chain corresponds to 235 to 312; the sequence is ELYQGIKFDA…TLMAKKRVIR (78 aa). The chain crosses the membrane as a helical span at residues 313–333; sequence MLMVIVVLFFLCWMPIFSANA. Over 334 to 348 the chain is Extracellular; that stretch reads WRAYDTVSAERRLSG. The helical transmembrane segment at 349–372 threads the bilayer; the sequence is TPISFILLLSYTSSCVNPIIYCFM. Topologically, residues 373 to 427 are cytoplasmic; it reads NRRFRLGFMATFPCCPNPGPPGPRAEAGEEEEGRTTRASLSRYSYSHMSASAPPS. Residue cysteine 386 is the site of S-palmitoyl cysteine attachment. The interval 391–427 is disordered; that stretch reads GPPGPRAEAGEEEEGRTTRASLSRYSYSHMSASAPPS. Positions 411 to 421 are enriched in polar residues; it reads SLSRYSYSHMS.

The protein belongs to the G-protein coupled receptor 1 family.

Its subcellular location is the cell membrane. Receptor for cholecystokinin. Mediates pancreatic growth and enzyme secretion, smooth muscle contraction of the gall bladder and stomach. Has a 1000-fold higher affinity for CCK rather than for gastrin. It modulates feeding and dopamine-induced behavior in the central and peripheral nervous system. This receptor mediates its action by association with G proteins that activate a phosphatidylinositol-calcium second messenger system. The protein is Cholecystokinin receptor type A (CCKAR) of Oryctolagus cuniculus (Rabbit).